The chain runs to 588 residues: Aspartate--tRNA ligase (588 aa).

An L-aspartate-binding site is contributed by Glu177. Residues 201-204 (QLFK) are aspartate. An L-aspartate-binding site is contributed by Arg223. Residues 223–225 (RDE) and Gln232 each bind ATP. His451 serves as a coordination point for L-aspartate. Glu485 is a binding site for ATP. Residue Arg492 participates in L-aspartate binding. Residue 537-540 (GLDR) coordinates ATP.

The protein belongs to the class-II aminoacyl-tRNA synthetase family. Type 1 subfamily. As to quaternary structure, homodimer.

It is found in the cytoplasm. It catalyses the reaction tRNA(Asp) + L-aspartate + ATP = L-aspartyl-tRNA(Asp) + AMP + diphosphate. In terms of biological role, catalyzes the attachment of L-aspartate to tRNA(Asp) in a two-step reaction: L-aspartate is first activated by ATP to form Asp-AMP and then transferred to the acceptor end of tRNA(Asp). This is Aspartate--tRNA ligase from Staphylococcus haemolyticus (strain JCSC1435).